The chain runs to 126 residues: Large ribosomal subunit protein bL12 (126 aa).

This sequence belongs to the bacterial ribosomal protein bL12 family. As to quaternary structure, homodimer. Part of the ribosomal stalk of the 50S ribosomal subunit. Forms a multimeric L10(L12)X complex, where L10 forms an elongated spine to which 2 to 4 L12 dimers bind in a sequential fashion. Binds GTP-bound translation factors.

Functionally, forms part of the ribosomal stalk which helps the ribosome interact with GTP-bound translation factors. Is thus essential for accurate translation. This Legionella pneumophila (strain Paris) protein is Large ribosomal subunit protein bL12.